The following is a 167-amino-acid chain: Small ribosomal subunit protein uS7c (167 aa).

It belongs to the universal ribosomal protein uS7 family. Part of the 30S ribosomal subunit.

It localises to the plastid. The protein localises to the chloroplast. In terms of biological role, one of the primary rRNA binding proteins, it binds directly to 16S rRNA where it nucleates assembly of the head domain of the 30S subunit. The sequence is that of Small ribosomal subunit protein uS7c (rps7) from Tetradesmus obliquus (Green alga).